A 389-amino-acid chain; its full sequence is Glutamate 5-kinase (389 aa).

Lysine 16 serves as a coordination point for ATP. Residues serine 56, aspartate 143, and asparagine 155 each contribute to the substrate site. 175–176 (SD) lines the ATP pocket. Residues 281–358 (AGELHVDDGA…AEIEAILGYA (78 aa)) form the PUA domain.

The protein belongs to the glutamate 5-kinase family.

The protein localises to the cytoplasm. It carries out the reaction L-glutamate + ATP = L-glutamyl 5-phosphate + ADP. It participates in amino-acid biosynthesis; L-proline biosynthesis; L-glutamate 5-semialdehyde from L-glutamate: step 1/2. Functionally, catalyzes the transfer of a phosphate group to glutamate to form L-glutamate 5-phosphate. The chain is Glutamate 5-kinase from Rhizobium etli (strain CIAT 652).